The following is a 460-amino-acid chain: Homocitrate synthase (460 aa).

One can recognise a Pyruvate carboxyltransferase domain in the interval 3-258 (VGILDSTLRE…IEVVKLNKLQ (256 aa)). Arg11 is a 2-oxoglutarate binding site. Glu12 contributes to the Mg(2+) binding site. 2-oxoglutarate is bound by residues His75, Arg135, and Thr169. Residues His197 and His199 each contribute to the Mg(2+) site. His291 serves as the catalytic Proton acceptor.

Belongs to the alpha-IPM synthase/homocitrate synthase family. Homocitrate synthase LYS20/LYS21 subfamily. As to quaternary structure, forms a homotetramer in the absence of lysine, and is in hexadecamer-octamer equilibrium in the presence of lysine. Mg(2+) serves as cofactor. The cofactor is Mn(2+).

It catalyses the reaction acetyl-CoA + 2-oxoglutarate + H2O = (2R)-homocitrate + CoA + H(+). It participates in amino-acid biosynthesis; L-lysine biosynthesis via AAA pathway; L-alpha-aminoadipate from 2-oxoglutarate: step 1/5. Inhibited by lysine. Functionally, catalyzes the aldol-type condensation of 2-oxoglutarate with acetyl-CoA to yield homocitrate. Carries out the first step of the alpha-aminoadipate (AAA) lysine biosynthesis pathway. The sequence is that of Homocitrate synthase from Sulfurisphaera tokodaii (strain DSM 16993 / JCM 10545 / NBRC 100140 / 7) (Sulfolobus tokodaii).